The primary structure comprises 220 residues: Large ribosomal subunit protein eL15 (220 aa).

The protein belongs to the eukaryotic ribosomal protein eL15 family.

The sequence is that of Large ribosomal subunit protein eL15 from Staphylothermus marinus (strain ATCC 43588 / DSM 3639 / JCM 9404 / F1).